The primary structure comprises 195 residues: ATP-dependent Clp protease proteolytic subunit (195 aa).

The active-site Nucleophile is serine 98. The active site involves histidine 123.

Belongs to the peptidase S14 family. Fourteen ClpP subunits assemble into 2 heptameric rings which stack back to back to give a disk-like structure with a central cavity, resembling the structure of eukaryotic proteasomes.

It is found in the cytoplasm. The enzyme catalyses Hydrolysis of proteins to small peptides in the presence of ATP and magnesium. alpha-casein is the usual test substrate. In the absence of ATP, only oligopeptides shorter than five residues are hydrolyzed (such as succinyl-Leu-Tyr-|-NHMec, and Leu-Tyr-Leu-|-Tyr-Trp, in which cleavage of the -Tyr-|-Leu- and -Tyr-|-Trp bonds also occurs).. Functionally, cleaves peptides in various proteins in a process that requires ATP hydrolysis. Has a chymotrypsin-like activity. Plays a major role in the degradation of misfolded proteins. The polypeptide is ATP-dependent Clp protease proteolytic subunit (Thermodesulfovibrio yellowstonii (strain ATCC 51303 / DSM 11347 / YP87)).